The sequence spans 498 residues: ATP synthase subunit beta, chloroplastic (498 aa).

An ATP-binding site is contributed by 172–179 (GGAGVGKT).

Belongs to the ATPase alpha/beta chains family. As to quaternary structure, F-type ATPases have 2 components, CF(1) - the catalytic core - and CF(0) - the membrane proton channel. CF(1) has five subunits: alpha(3), beta(3), gamma(1), delta(1), epsilon(1). CF(0) has four main subunits: a(1), b(1), b'(1) and c(9-12).

Its subcellular location is the plastid. The protein localises to the chloroplast thylakoid membrane. It catalyses the reaction ATP + H2O + 4 H(+)(in) = ADP + phosphate + 5 H(+)(out). In terms of biological role, produces ATP from ADP in the presence of a proton gradient across the membrane. The catalytic sites are hosted primarily by the beta subunits. The polypeptide is ATP synthase subunit beta, chloroplastic (Gossypium barbadense (Sea Island cotton)).